A 212-amino-acid polypeptide reads, in one-letter code: Disintegrin-like halysetin (212 aa).

A Disintegrin domain is found at 4–90 (PPVCGNELLE…ECPADVFHKN (87 aa)). 9 disulfide bridges follow: Cys-7/Cys-26, Cys-18/Cys-36, Cys-62/Cys-82, Cys-69/Cys-94, Cys-101/Cys-106, Cys-113/Cys-128, Cys-151/Cys-158, Cys-163/Cys-174, and Cys-200/Cys-205. Positions 68 to 70 (ECD) match the D/ECD-tripeptide motif.

It belongs to the venom metalloproteinase (M12B) family. P-III subfamily. P-IIIb sub-subfamily. In terms of assembly, monomer. In terms of tissue distribution, expressed by the venom gland.

The protein localises to the secreted. Inhibits human platelet aggregation stimulated by collagen with an IC(50) of 420 nM. This chain is Disintegrin-like halysetin, found in Gloydius halys (Chinese water mocassin).